A 272-amino-acid polypeptide reads, in one-letter code: Type II secretion system protein C (272 aa).

The Cytoplasmic portion of the chain corresponds to methionine 1–arginine 16. Residues isoleucine 17–tryptophan 35 traverse the membrane as a helical segment. At arginine 36–glutamate 272 the chain is on the periplasmic side.

It belongs to the GSP C family.

Its subcellular location is the cell inner membrane. Its function is as follows. Involved in a type II secretion system (T2SS, formerly general secretion pathway, GSP) for the export of proteins. Required for the translocation of the multiple pectic enzymes. In Dickeya dadantii (strain 3937) (Erwinia chrysanthemi (strain 3937)), this protein is Type II secretion system protein C (outC).